The sequence spans 550 residues: Dihydroxy-acid dehydratase (550 aa).

Residue aspartate 78 coordinates Mg(2+). Cysteine 119 provides a ligand contact to [2Fe-2S] cluster. Positions 120 and 121 each coordinate Mg(2+). The residue at position 121 (lysine 121) is an N6-carboxylysine. Position 191 (cysteine 191) interacts with [2Fe-2S] cluster. Residue glutamate 440 participates in Mg(2+) binding. Serine 466 serves as the catalytic Proton acceptor.

Belongs to the IlvD/Edd family. Homodimer. [2Fe-2S] cluster serves as cofactor. The cofactor is Mg(2+).

It catalyses the reaction (2R)-2,3-dihydroxy-3-methylbutanoate = 3-methyl-2-oxobutanoate + H2O. The catalysed reaction is (2R,3R)-2,3-dihydroxy-3-methylpentanoate = (S)-3-methyl-2-oxopentanoate + H2O. It participates in amino-acid biosynthesis; L-isoleucine biosynthesis; L-isoleucine from 2-oxobutanoate: step 3/4. The protein operates within amino-acid biosynthesis; L-valine biosynthesis; L-valine from pyruvate: step 3/4. Its function is as follows. Functions in the biosynthesis of branched-chain amino acids. Catalyzes the dehydration of (2R,3R)-2,3-dihydroxy-3-methylpentanoate (2,3-dihydroxy-3-methylvalerate) into 2-oxo-3-methylpentanoate (2-oxo-3-methylvalerate) and of (2R)-2,3-dihydroxy-3-methylbutanoate (2,3-dihydroxyisovalerate) into 2-oxo-3-methylbutanoate (2-oxoisovalerate), the penultimate precursor to L-isoleucine and L-valine, respectively. The polypeptide is Dihydroxy-acid dehydratase (Methanococcus maripaludis (strain DSM 14266 / JCM 13030 / NBRC 101832 / S2 / LL)).